The chain runs to 312 residues: Malate dehydrogenase (312 aa).

NAD(+)-binding positions include 12-17 and Asp36; that span reads GSGFTG. Arg87 and Arg93 together coordinate substrate. Residues Asn100 and 123–125 each bind NAD(+); that span reads LTN. Asn125 is a binding site for substrate. Phosphoserine is present on Ser149. Residue Arg156 coordinates substrate. His180 (proton acceptor) is an active-site residue.

The protein belongs to the LDH/MDH superfamily. MDH type 3 family.

It catalyses the reaction (S)-malate + NAD(+) = oxaloacetate + NADH + H(+). Catalyzes the reversible oxidation of malate to oxaloacetate. This is Malate dehydrogenase from Oceanobacillus iheyensis (strain DSM 14371 / CIP 107618 / JCM 11309 / KCTC 3954 / HTE831).